The primary structure comprises 88 residues: MMKQQFFLFLAVIVMISSVIEAGRGREFMSNLKEKLSGVKEKMKNSWNRLTSMSEYACPVIEKWCEDHCQAKNAIGRCENTECKCLSK.

The signal sequence occupies residues 1 to 22 (MMKQQFFLFLAVIVMISSVIEA). The BetaSPN-type CS-alpha/beta domain occupies 55-88 (EYACPVIEKWCEDHCQAKNAIGRCENTECKCLSK). Cystine bridges form between cysteine 58-cysteine 78, cysteine 65-cysteine 83, and cysteine 69-cysteine 85.

Belongs to the long chain scorpion toxin family. Class 2 subfamily. Expressed by the venom gland.

It localises to the secreted. Inhibits voltage-gated potassium channels. In terms of biological role, the synthetic meucin-24 inhibits the development of P.berghei ookinetes, kills intraerythrocytic P.falciparum, and is cytotoxic to the Drosophila S2 cells at micromolar concentrations. No antibacterial, antifungal and hemolytic activities have been found at micromolar concentrations. The sequence is that of Potassium channel toxin MeuTXKbeta3-meucin-24 from Mesobuthus eupeus (Lesser Asian scorpion).